Consider the following 1024-residue polypeptide: NLR family CARD domain-containing protein 4 (1024 aa).

In terms of domain architecture, CARD spans 1 to 88 (MNFIRNNRRA…FVYQDLTGQN (88 aa)). The interval 95-298 (EEDLNVLAQN…HVGALTAEVG (204 aa)) is nucleotide-binding domain (NBD). Residues threonine 135, 172–177 (GKGKST), and histidine 443 each bind ATP. The NACHT domain maps to 163–476 (SPCLIEGESG…VSKGNSYLNK (314 aa)). Positions 356 to 463 (AHTQTMLFQT…RLSSLLTSKE (108 aa)) are winged-helix domain (WHD). Serine 533 carries the post-translational modification Phosphoserine. LRR repeat units lie at residues 578 to 598 (FFQG…LFDF), 656 to 679 (KQEF…DIKY), 735 to 758 (VTGL…LIDS), 762 to 785 (LKNL…NLAE), 787 to 812 (LRSL…DYIV), 824 to 847 (EMKL…LHNL), 848 to 870 (IKLS…ALQE), 878 to 902 (LGEL…LLKQ), 911 to 933 (KLGL…FLEM), 936 to 963 (LRDL…VFEN), 965 to 985 (KQLV…ALVR), and 999 to 1021 (EVKL…TFKL).

As to quaternary structure, homooligomer; homooligomerizes following activation of Naip proteins by pathogenic proteins such as S.typhimurium (Salmonella) flagellin or PrgJ. Component of the NLRC4 inflammasome, at least composed of NLRC4, caspase-1 (CASP1) and some NAIP protein (Naip, Naip2 or Naip5). Interacts with Naip5 and Naip6; following Naip5 and Naip6 engagement by Salmonella flagellin. Interacts with Naip2; following Naip2 engagement by Salmonella PrgJ. The inflammasome is a huge complex that contains multiple copies of NLRC4 and a single Naip protein chain. Some NLRC4 inflammasomes contain PYCARD/ASC, while some others directly contact and activate CASP1. Interacts with EIF2AK2/PKR. Post-translationally, phosphorylated at Ser-533 following infection of macrophages with S.typhimurium (Salmonella). Phosphorylation is essential for NLRC4 inflammasome function to promote caspase-1 activation and pyroptosis. PRKCD phosphorylates Ser-533 in vitro. Expressed by intestinal mononuclear phagocytes.

It localises to the cytoplasm. The protein localises to the cytosol. The protein resides in the inflammasome. In terms of biological role, key component of inflammasomes that indirectly senses specific proteins from pathogenic bacteria and fungi and responds by assembling an inflammasome complex that promotes caspase-1 activation, cytokine production and macrophage pyroptosis. The NLRC4 inflammasome is activated as part of the innate immune response to a range of intracellular bacteria. It senses pathogenic proteins of the type III secretion system (T3SS) and type IV secretion system (T4SS) such as flagellin and PrgJ-like rod proteins via the Naip proteins (Naip1, Naip2 or Naip5): specific Naip proteins recognize and bind pathogenic proteins, driving assembly and activation of the NLRC4 inflammasome. The NLRC4 inflammasome senses Gram-negative bacteria such as L.pneumophila and P.aeruginosa, enteric pathogens S.typhimurium (Salmonella) and S.flexneri and fungal pathogen C.albicans. In intestine, the NLRC4 inflammasome is able to discriminate between commensal and pathogenic bacteria and specifically drives production of interleukin-1 beta (IL1B) in response to infection by Salmonella or P.aeruginosa. In case of L.pneumophila infection the inflammasome acts by activating caspase-7. In Mus musculus (Mouse), this protein is NLR family CARD domain-containing protein 4 (Nlrc4).